Consider the following 846-residue polypeptide: Patched domain-containing protein 4 (846 aa).

The next 10 membrane-spanning stretches (helical) occupy residues 41-61 (HPVFFLTVPAVLTITFGLSAL), 230-250 (SILARSKVLVSLVLILTTATL), 265-285 (GLLGVLTVCISIITAAGIFFI), 293-313 (TLLGIPFFAMGHGTKGVFELL), 336-356 (VMVTYTMTSSLYFITFGMGAS), 373-393 (VSILLNYFYIFSFFGSCLVFA), 465-485 (PFVVILYLIYASFSFMGCLQI), 660-680 (PVLIAGFGVLLVLILTFFLVI), 686-706 (FWLILSVTSIELGVLGLMTLW), and 718-738 (LIYTLNFAIDHCAPLLFTFVL). Positions 233–392 (ARSKVLVSLV…FSFFGSCLVF (160 aa)) constitute an SSD domain. The N-linked (GlcNAc...) asparagine glycan is linked to Asn-762. A run of 2 helical transmembrane segments spans residues 765-785 (SFLIGLVPLLFVPSNLTFTLF) and 787-807 (CLLLTGGCTLLHCFVILPVFL).

The protein belongs to the patched family.

Its subcellular location is the membrane. Could act as a repressor of canonical hedgehog signaling by antagonizing the effects of SMO, as suggested by down-regulation of hedgehog target genes, including GLI1, PTCH1, and PTCH2 in PTCHD4-expressing cells. This Homo sapiens (Human) protein is Patched domain-containing protein 4 (PTCHD4).